The sequence spans 449 residues: Phosphoglucosamine mutase (449 aa).

The Phosphoserine intermediate role is filled by serine 104. Mg(2+) contacts are provided by serine 104, aspartate 243, aspartate 245, and aspartate 247. Residue serine 104 is modified to Phosphoserine.

The protein belongs to the phosphohexose mutase family. Requires Mg(2+) as cofactor. Activated by phosphorylation.

The catalysed reaction is alpha-D-glucosamine 1-phosphate = D-glucosamine 6-phosphate. Its function is as follows. Catalyzes the conversion of glucosamine-6-phosphate to glucosamine-1-phosphate. The polypeptide is Phosphoglucosamine mutase (Xanthomonas axonopodis pv. citri (strain 306)).